The following is a 408-amino-acid chain: MAENFRIIDGGVTAPKGFIANGHKDRKYGVTIIASEVDAVCAGVFTTNKVFAHPVSLSKETLKNSDTFRAIIANSGNANCFTKGGMDDARAFVKKASSLLNIPESQILSASTGVIGRKMAMDILNREVEKAYESLKLESNNENAAKAIMTTDAFKKTVAVEFNVGEKVVKIGGIAKGAGMIAPNMLHATMLGFITTDIEISKEELKNSLQNAADESFNNAVVDGDMSTNDTVFVLANGKSNVNYRECIEEFDKALLYISTELAKMIVSDGEGAKKLIEAVLKGAATKEDAKKASMSIVRSLLLKTAIHGADPNWGRIAAAVGYSGAEMDMNNFDIIISSITSGKETYLVKCGEQLADEGTAELKMAQEIMKDSKIRITVDLKKGEFKNTSFGCDLGYEYVRINSEYTT.

Residues Thr150, Lys176, Thr189, Glu271, Asn403, and Thr408 each contribute to the substrate site. Catalysis depends on Thr189, which acts as the Nucleophile.

It belongs to the ArgJ family. In terms of assembly, heterotetramer of two alpha and two beta chains.

The protein resides in the cytoplasm. The enzyme catalyses N(2)-acetyl-L-ornithine + L-glutamate = N-acetyl-L-glutamate + L-ornithine. Its pathway is amino-acid biosynthesis; L-arginine biosynthesis; L-ornithine and N-acetyl-L-glutamate from L-glutamate and N(2)-acetyl-L-ornithine (cyclic): step 1/1. Functionally, catalyzes the transfer of the acetyl group from N(2)-acetylornithine to glutamate, forming N-acetylglutamate and L-ornithine. The chain is Glutamate N-acetyltransferase from Methanococcus vannielii (strain ATCC 35089 / DSM 1224 / JCM 13029 / OCM 148 / SB).